The following is a 588-amino-acid chain: Proteasome-associated ATPase (588 aa).

Over residues 1–10 the composition is skewed to basic and acidic residues; sequence MAAHDDDMNR. The segment at 1–23 is disordered; the sequence is MAAHDDDMNRGIRPGRGSDDPAG. The stretch at 47–94 forms a coiled coil; that stretch reads RILEERIVELQTNLAGVSAQNERLANTLREARDQIVALKEEVDRLAQP. 276–281 provides a ligand contact to ATP; that stretch reads GCGKTL. The segment at 587 to 588 is docks into pockets in the proteasome alpha-ring; the sequence is YL.

The protein belongs to the AAA ATPase family. Homohexamer. Assembles into a hexameric ring structure that caps the 20S proteasome core. Strongly interacts with the prokaryotic ubiquitin-like protein Pup through a hydrophobic interface; the interacting region of ARC lies in its N-terminal coiled-coil domain. There is one Pup binding site per ARC hexamer ring. Upon ATP-binding, the C-terminus of ARC interacts with the alpha-rings of the proteasome core, possibly by binding to the intersubunit pockets.

The protein operates within protein degradation; proteasomal Pup-dependent pathway. Functionally, ATPase which is responsible for recognizing, binding, unfolding and translocation of pupylated proteins into the bacterial 20S proteasome core particle. May be essential for opening the gate of the 20S proteasome via an interaction with its C-terminus, thereby allowing substrate entry and access to the site of proteolysis. Thus, the C-termini of the proteasomal ATPase may function like a 'key in a lock' to induce gate opening and therefore regulate proteolysis. The chain is Proteasome-associated ATPase from Streptomyces avermitilis (strain ATCC 31267 / DSM 46492 / JCM 5070 / NBRC 14893 / NCIMB 12804 / NRRL 8165 / MA-4680).